The primary structure comprises 1127 residues: Collagen alpha-2(I) chain (1127 aa).

The segment covering 1-16 (DGKPGLPGPAGPPGPP) has biased composition (pro residues). Residues 1–1017 (DGKPGLPGPA…GPAGPAGGGY (1017 aa)) are disordered. Composition is skewed to low complexity over residues 171-191 (AGPA…AAGP), 221-230 (EPGPNGAVGP), and 237-258 (PGNN…AGAP). Positions 260-270 (FPGPRGGPGPQ) are enriched in pro residues. Low complexity predominate over residues 272 to 282 (PQGAAGQRGLA). The span at 289–298 (GVKGDGGPKG) shows a compositional bias: gly residues. 4 stretches are compositionally biased toward low complexity: residues 326-345 (ATGP…RGMP), 355-398 (AAGP…AGPA), 436-449 (APGP…TGAT), and 461-473 (QGAA…QGLP). The segment covering 474–483 (GPAGGAGEAG) has biased composition (gly residues). A compositionally biased stretch (low complexity) spans 508-518 (NPGAAGASGPQ). A compositionally biased stretch (gly residues) spans 531-568 (GTDGGKGEPGAAGAAGGPGHQGPGGMPGERGAAGGPGG). The span at 569–580 (KGEKGEAGHRGP) shows a compositional bias: basic and acidic residues. 2 stretches are compositionally biased toward low complexity: residues 611-625 (SGSF…ARGA) and 634-647 (PAGA…PGAD). A compositionally biased stretch (gly residues) spans 657–666 (GPSGGKGESG). Composition is skewed to low complexity over residues 667–692 (PSGP…TGAR), 703–730 (FPGA…PAGK), and 758–778 (SGEK…PLGL). Over residues 792–801 (GSPGGAGAVG) the composition is skewed to gly residues. Low complexity-rich tracts occupy residues 802 to 824 (EAGR…LGLP) and 860 to 872 (PGSS…AGAP). The segment covering 876 to 897 (GPSGGAGRPGNRGESGPGGAAG) has biased composition (gly residues). The segment covering 898–913 (AVGPAGARGAAGPSGP) has biased composition (low complexity). The segment covering 914 to 928 (RGEKGVAGEKGERGM) has biased composition (basic and acidic residues). Composition is skewed to low complexity over residues 937 to 956 (LQGM…AGPN) and 986 to 997 (PGARGPPGYVGP). Residues 998–1010 (AGPPGXPGLPGPA) are compositionally biased toward pro residues. Residues 1093 to 1127 (RTNKPSRLPLLDLAPLDLGGADQEFGLDLGPVCFK) form the Fibrillar collagen NC1 domain.

Belongs to the fibrillar collagen family.

The protein resides in the secreted. It is found in the extracellular space. The protein localises to the extracellular matrix. This chain is Collagen alpha-2(I) chain, found in Epinephelus marginatus (Dusky grouper).